A 196-amino-acid chain; its full sequence is Pyridoxal 5'-phosphate synthase subunit PdxT (196 aa).

L-glutamine is bound at residue 47-49 (GES). Cys-79 (nucleophile) is an active-site residue. L-glutamine-binding positions include Arg-106 and 134-135 (IR). Residues His-170 and Glu-172 each act as charge relay system in the active site.

It belongs to the glutaminase PdxT/SNO family. In the presence of PdxS, forms a dodecamer of heterodimers. Only shows activity in the heterodimer.

The enzyme catalyses aldehydo-D-ribose 5-phosphate + D-glyceraldehyde 3-phosphate + L-glutamine = pyridoxal 5'-phosphate + L-glutamate + phosphate + 3 H2O + H(+). It catalyses the reaction L-glutamine + H2O = L-glutamate + NH4(+). It functions in the pathway cofactor biosynthesis; pyridoxal 5'-phosphate biosynthesis. Functionally, catalyzes the hydrolysis of glutamine to glutamate and ammonia as part of the biosynthesis of pyridoxal 5'-phosphate. The resulting ammonia molecule is channeled to the active site of PdxS. This chain is Pyridoxal 5'-phosphate synthase subunit PdxT, found in Bacillus thuringiensis subsp. konkukian (strain 97-27).